The following is a 345-amino-acid chain: D-apiose dehydrogenase (345 aa).

15 to 16 provides a ligand contact to NAD(+); the sequence is FF. The Mg(2+) site is built by W24, K25, V27, and A30. Residues D37, S79, 97 to 98, N126, and 165 to 167 contribute to the NAD(+) site; these read QK and QPY. A substrate-binding site is contributed by K98. Residues Q165, D178, H182, and Y232 each contribute to the substrate site.

This sequence belongs to the Gfo/Idh/MocA family.

It catalyses the reaction D-apiofuranose + NAD(+) = D-apionolactone + NADH + H(+). It functions in the pathway carbohydrate metabolism. In terms of biological role, involved in catabolism of D-apiose. Catalyzes oxidation of D-apiose to D-apionolactone. The sequence is that of D-apiose dehydrogenase from Rhizobium rhizogenes (strain K84 / ATCC BAA-868) (Agrobacterium radiobacter).